Reading from the N-terminus, the 265-residue chain is Tryptophan synthase alpha chain (265 aa).

Active-site proton acceptor residues include glutamate 49 and aspartate 60.

It belongs to the TrpA family. In terms of assembly, tetramer of two alpha and two beta chains.

The catalysed reaction is (1S,2R)-1-C-(indol-3-yl)glycerol 3-phosphate + L-serine = D-glyceraldehyde 3-phosphate + L-tryptophan + H2O. The protein operates within amino-acid biosynthesis; L-tryptophan biosynthesis; L-tryptophan from chorismate: step 5/5. Its function is as follows. The alpha subunit is responsible for the aldol cleavage of indoleglycerol phosphate to indole and glyceraldehyde 3-phosphate. This is Tryptophan synthase alpha chain from Polynucleobacter necessarius subsp. necessarius (strain STIR1).